A 775-amino-acid chain; its full sequence is WD repeat-containing protein pop1 (775 aa).

The F-box domain maps to 298–345 (KNFLTGFPAEITNLVLTHLDAPSLCAVSQVSHHWYKLVSSNEELWKSL). 5 WD repeats span residues 444–472 (EHEG…RVWD), 484–538 (GHTS…RLWS), 575–603 (GHTD…RVWK), 615–645 (GHVG…RIWN), and 657–687 (GHSN…RVWD).

As to quaternary structure, homodimer and heterodimer with pop2. Binds to cdc18, phosphorylated cig2, cul1, pip1 and skp1.

Its subcellular location is the nucleus. Functionally, involved in maintenance of ploidy through proteasome dependent degradation of CDK inhibitor rum1 and S-phase initiator cdc18. Functions as a recognition factor for rum1 and cdc18, which are subsequently ubiquitinated and targeted to the 26S proteasome for degradation. Together with pop2, required for cig2 instability during G2 and M phase and cig2 degradation in exponentially growing cells. Regulates cell-cycle progression under starvation through the rum1 protein. The polypeptide is WD repeat-containing protein pop1 (pop1) (Schizosaccharomyces pombe (strain 972 / ATCC 24843) (Fission yeast)).